We begin with the raw amino-acid sequence, 99 residues long: Microcin E492 (99 aa).

An N-terminal signal peptide occupies residues 1-15 (MREISQKDLNLAFGA). The interval 80-99 (SWNGSGSGYNSATSSSGSGS) is disordered. The span at 87–99 (GYNSATSSSGSGS) shows a compositional bias: low complexity. S99 bears the Serine microcin E492 siderophore ester mark.

It belongs to the class IIa microcin family. In terms of assembly, multimer. Possibly forms a homodimer or a homotrimer. In terms of processing, the C-terminal Ser is modified by attachment to a siderophore similar to enterobactin, which can bind one atom of iron. The modification consists of an ester linkage of the serine carboxyl to O6 of a glucose which is linked by a C-glycosidic bond to the 5'-benzoyl of a linear triester of N-(2,3-dihydroxybenzoyl)serine. Presence of the siderophore ester increases the antibacterial activity of the protein.

Its function is as follows. Channel-forming bacteriocin. Forms cation-selective channels. Active on enterobacteria, with highest activity against E.coli. Not active on other Gram-negative bacteria, Gram-positive bacteria or fungi. The unmodified protein is active against E.coli and S.enteritidis. When the siderophore ester is present at Ser-99, antibacterial activity against these species is increased and activity is also detected against E.cloacae and K.pneumoniae. Neutralized by its immunity protein MceB. The sequence is that of Microcin E492 from Klebsiella pneumoniae.